The chain runs to 109 residues: Thiosulfate sulfurtransferase GlpE (109 aa).

In terms of domain architecture, Rhodanese spans 17–105 (AQGQALLLDI…WQRAYPEEVA (89 aa)). Cys65 functions as the Cysteine persulfide intermediate in the catalytic mechanism.

The protein belongs to the GlpE family.

Its subcellular location is the cytoplasm. It catalyses the reaction thiosulfate + hydrogen cyanide = thiocyanate + sulfite + 2 H(+). It carries out the reaction thiosulfate + [thioredoxin]-dithiol = [thioredoxin]-disulfide + hydrogen sulfide + sulfite + 2 H(+). In terms of biological role, transferase that catalyzes the transfer of sulfur from thiosulfate to thiophilic acceptors such as cyanide or dithiols. May function in a CysM-independent thiosulfate assimilation pathway by catalyzing the conversion of thiosulfate to sulfite, which can then be used for L-cysteine biosynthesis. The polypeptide is Thiosulfate sulfurtransferase GlpE (Edwardsiella ictaluri (strain 93-146)).